The sequence spans 191 residues: Calcium-activated potassium channel subunit beta-1 (191 aa).

The Cytoplasmic segment spans residues Met-1 to Cys-18. A helical membrane pass occupies residues Leu-19–Leu-39. Residues Pro-40–Gln-155 lie on the Extracellular side of the membrane. 2 N-linked (GlcNAc...) asparagine glycosylation sites follow: Asn-80 and Asn-142. Residues Ile-156–Ala-176 traverse the membrane as a helical segment. Topologically, residues Met-177–Lys-191 are cytoplasmic.

It belongs to the KCNMB (TC 8.A.14.1) family. KCNMB1 subfamily. Interacts with KCNMA1 tetramer. There are probably 4 molecules of KCMNB1 per KCNMA1 tetramer. N-glycosylated. In terms of tissue distribution, weakly expressed. In brain, it is expressed in a few discrete populations of neurons that also express KCNMA1.

Its subcellular location is the membrane. Functionally, regulatory subunit of the calcium activated potassium KCNMA1 (maxiK) channel. Modulates the calcium sensitivity and gating kinetics of KCNMA1, thereby contributing to KCNMA1 channel diversity. Increases the apparent Ca(2+)/voltage sensitivity of the KCNMA1 channel. It also modifies KCNMA1 channel kinetics and alters its pharmacological properties. It slows down the activation and the deactivation kinetics of the channel. Acts as a negative regulator of smooth muscle contraction by enhancing the calcium sensitivity to KCNMA1. Its presence is also a requirement for internal binding of the KCNMA1 channel opener dehydrosoyasaponin I (DHS-1) triterpene glycoside and for external binding of the agonist hormone 17-beta-estradiol (E2). Increases the binding activity of charybdotoxin (CTX) toxin to KCNMA1 peptide blocker by increasing the CTX association rate and decreasing the dissociation rate. The chain is Calcium-activated potassium channel subunit beta-1 (Kcnmb1) from Rattus norvegicus (Rat).